The sequence spans 419 residues: Tyrosine--tRNA ligase (419 aa).

L-tyrosine is bound at residue tyrosine 34. The 'HIGH' region signature appears at 39 to 48 (PTADSLHLGN). Residues tyrosine 169 and glutamine 173 each contribute to the L-tyrosine site. Residues 229–233 (KFGKS) carry the 'KMSKS' region motif. Lysine 232 lines the ATP pocket. The S4 RNA-binding domain occupies 353 to 419 (LTLIELLISA…GKKKNFVLTY (67 aa)).

The protein belongs to the class-I aminoacyl-tRNA synthetase family. TyrS type 1 subfamily. In terms of assembly, homodimer.

Its subcellular location is the cytoplasm. It catalyses the reaction tRNA(Tyr) + L-tyrosine + ATP = L-tyrosyl-tRNA(Tyr) + AMP + diphosphate + H(+). Its function is as follows. Catalyzes the attachment of tyrosine to tRNA(Tyr) in a two-step reaction: tyrosine is first activated by ATP to form Tyr-AMP and then transferred to the acceptor end of tRNA(Tyr). The sequence is that of Tyrosine--tRNA ligase from Lactococcus lactis subsp. cremoris (strain SK11).